Consider the following 75-residue polypeptide: Exodeoxyribonuclease 7 small subunit (75 aa).

It belongs to the XseB family. In terms of assembly, heterooligomer composed of large and small subunits.

The protein localises to the cytoplasm. It catalyses the reaction Exonucleolytic cleavage in either 5'- to 3'- or 3'- to 5'-direction to yield nucleoside 5'-phosphates.. Its function is as follows. Bidirectionally degrades single-stranded DNA into large acid-insoluble oligonucleotides, which are then degraded further into small acid-soluble oligonucleotides. In Elusimicrobium minutum (strain Pei191), this protein is Exodeoxyribonuclease 7 small subunit.